A 75-amino-acid polypeptide reads, in one-letter code: MNSKYLFVFLILNVIFIDLCQGFLFNVIPHAINATASLIKKGTRRRELGSQYDYLQDFRKRELDLDDLLSKFPDY.

The signal sequence occupies residues 1-22 (MNSKYLFVFLILNVIFIDLCQG). The residue at position 41 (lysine 41) is a Lysine amide. Positions 42–75 (GTRRRELGSQYDYLQDFRKRELDLDDLLSKFPDY) are excised as a propeptide.

Belongs to the non-disulfide-bridged peptide (NDBP) superfamily. Short antimicrobial peptide (group 4) family. As to expression, expressed by the venom gland.

It is found in the secreted. In Chaerilus tricostatus (Scorpion), this protein is Peptide Ctri9610.